An 845-amino-acid chain; its full sequence is Protein P (845 aa).

A terminal protein domain (TP) region spans residues 1 to 179; it reads MPLSYQHFRK…FCGSPYSWEQ (179 aa). The tract at residues 180-348 is spacer; that stretch reads ELQHGRLVIK…YCLSHLVNLR (169 aa). A disordered region spans residues 226 to 246; sequence GLQPHQGPLASSQPGRSGSIR. The tract at residues 349-692 is polymerase/reverse transcriptase domain (RT); it reads EDRGPCDEHG…YMNLYPVARQ (344 aa). The Reverse transcriptase domain occupies 359–602; the sequence is EHHIRIPRTP…YSLNFMGYVI (244 aa). Mg(2+) is bound by residues aspartate 431, aspartate 553, and aspartate 554.

This sequence belongs to the hepadnaviridae P protein family.

The catalysed reaction is DNA(n) + a 2'-deoxyribonucleoside 5'-triphosphate = DNA(n+1) + diphosphate. It catalyses the reaction Endonucleolytic cleavage to 5'-phosphomonoester.. Activated by host HSP70 and HSP40 in vitro to be able to bind the epsilon loop of the pgRNA. Because deletion of the RNase H region renders the protein partly chaperone-independent, the chaperones may be needed indirectly to relieve occlusion of the RNA-binding site by this domain. Inhibited by several reverse-transcriptase inhibitors: Lamivudine, Adefovir and Entecavir. Its function is as follows. Multifunctional enzyme that converts the viral RNA genome into dsDNA in viral cytoplasmic capsids. This enzyme displays a DNA polymerase activity that can copy either DNA or RNA templates, and a ribonuclease H (RNase H) activity that cleaves the RNA strand of RNA-DNA heteroduplexes in a partially processive 3'- to 5'-endonucleasic mode. Neo-synthesized pregenomic RNA (pgRNA) are encapsidated together with the P protein, and reverse-transcribed inside the nucleocapsid. Initiation of reverse-transcription occurs first by binding the epsilon loop on the pgRNA genome, and is initiated by protein priming, thereby the 5'-end of (-)DNA is covalently linked to P protein. Partial (+)DNA is synthesized from the (-)DNA template and generates the relaxed circular DNA (RC-DNA) genome. After budding and infection, the RC-DNA migrates in the nucleus, and is converted into a plasmid-like covalently closed circular DNA (cccDNA). The activity of P protein does not seem to be necessary for cccDNA generation, and is presumably released from (+)DNA by host nuclear DNA repair machinery. In Hepatitis B virus genotype A2 subtype adw2 (isolate Germany/991/1990) (HBV-A), this protein is Protein P.